The primary structure comprises 179 residues: Inosine/xanthosine triphosphatase (179 aa).

Glu-71 is a Mg(2+) binding site. Position 71 to 72 (71 to 72 (EA)) interacts with substrate.

This sequence belongs to the YjjX NTPase family. As to quaternary structure, homodimer. It depends on Mg(2+) as a cofactor. Requires Mn(2+) as cofactor.

The enzyme catalyses XTP + H2O = XDP + phosphate + H(+). It carries out the reaction ITP + H2O = IDP + phosphate + H(+). Its function is as follows. Phosphatase that hydrolyzes non-canonical purine nucleotides such as XTP and ITP to their respective diphosphate derivatives. Probably excludes non-canonical purines from DNA/RNA precursor pool, thus preventing their incorporation into DNA/RNA and avoiding chromosomal lesions. The polypeptide is Inosine/xanthosine triphosphatase (Shewanella sp. (strain MR-7)).